Reading from the N-terminus, the 1018-residue chain is Transmembrane protein 132A (1018 aa).

An N-terminal signal peptide occupies residues 1–32 (MTERKAAAPRGPYGAWFCLLVALALEVVRVSS). At 33–846 (NHDTLDPIYL…VTDLELGMYA (814 aa)) the chain is on the extracellular side. N-linked (GlcNAc...) asparagine glycosylation occurs at asparagine 276. The tract at residues 606-911 (IEVRSPLSDA…QLDRCSSSGP (306 aa)) is binds to HSPA5/GRP78. Residues 666 to 1018 (LPAPKQEVAL…NYMERIRGSS (353 aa)) form a confers cellular localization similar to full-length form region. The segment covering 807 to 818 (ERAEEEAGKEEN) has biased composition (basic and acidic residues). A disordered region spans residues 807–833 (ERAEEEAGKEENEAKEEEEDEEEMVPA). Residues 819–830 (EAKEEEEDEEEM) are compositionally biased toward acidic residues. A helical transmembrane segment spans residues 847-867 (LLGIFCLAILIFLVNGVVFVL). Over 868–1018 (RYQRKEPPDS…NYMERIRGSS (151 aa)) the chain is Cytoplasmic. Residues 900 to 956 (SRQLDRCSSSGPPKGEGGCPCESGAGGDASTVAPSASESPAGSSSTLARKEAGGRRK) form a disordered region. Low complexity-rich tracts occupy residues 906–922 (CSSS…PCES) and 932–944 (APSA…GSSS).

This sequence belongs to the TMEM132 family. As to quaternary structure, interacts with HSPA5/GRP78.

Its subcellular location is the golgi apparatus membrane. The protein localises to the endoplasmic reticulum membrane. May play a role in embryonic and postnatal development of the brain. Increased resistance to cell death induced by serum starvation in cultured cells. Regulates cAMP-induced GFAP gene expression via STAT3 phosphorylation. In Mus musculus (Mouse), this protein is Transmembrane protein 132A (Tmem132a).